Here is a 207-residue protein sequence, read N- to C-terminus: MVSLISIVSVVFLLFTTFYHFGEARIINVGGSLDAWKVPESPNHSLNHWAESVRFQVGDALLFKYDSKIDSVLQVTKENYEKCNTQKPLEEHKDGYTTVKLDVSGPYYFISGAPSGNCAKGEKVTVVVQSPNHPKPGPAAVTPTLPPKPSTTPAAPAPAPPTPSPKSSTSTMAPAPAPAKSSAVGLVAGNGIFWASTLVAVIGLAFA.

An N-terminal signal peptide occupies residues 1 to 24; that stretch reads MVSLISIVSVVFLLFTTFYHFGEA. Residues 25 to 130 enclose the Phytocyanin domain; the sequence is RIINVGGSLD…GEKVTVVVQS (106 aa). Asn-43 carries an N-linked (GlcNAc...) asparagine glycan. An intrachain disulfide couples Cys-83 to Cys-118. Residues 129–179 are disordered; sequence QSPNHPKPGPAAVTPTLPPKPSTTPAAPAPAPPTPSPKSSTSTMAPAPAPA. The span at 144 to 164 shows a compositional bias: pro residues; it reads TLPPKPSTTPAAPAPAPPTPS. Low complexity predominate over residues 165 to 179; that stretch reads PKSSTSTMAPAPAPA. Ser-181 carries GPI-anchor amidated serine lipidation. Positions 182–207 are cleaved as a propeptide — removed in mature form; the sequence is SAVGLVAGNGIFWASTLVAVIGLAFA.

Belongs to the early nodulin-like (ENODL) family. In terms of tissue distribution, confined to flowers and siliques.

Its subcellular location is the cell membrane. Functionally, may act as a carbohydrate transporter. Required, together with ENODL11, ENODL12, ENODL13, ENODL14 and ENODL15, for male-female communication and pollen tube reception and burst at the synergid cell surface of the female gametophyte. This Arabidopsis thaliana (Mouse-ear cress) protein is Early nodulin-like protein 11.